A 174-amino-acid polypeptide reads, in one-letter code: Tat proofreading chaperone TtrD (174 aa).

This sequence belongs to the TorD/DmsD family. As to quaternary structure, monomer.

The protein resides in the cytoplasm. In terms of biological role, binds specifically to the Tat signal peptide of the TtrA subunit of the tetrathionate reductase. This is Tat proofreading chaperone TtrD (ttrD) from Archaeoglobus fulgidus (strain ATCC 49558 / DSM 4304 / JCM 9628 / NBRC 100126 / VC-16).